A 101-amino-acid polypeptide reads, in one-letter code: Urease subunit beta (101 aa).

Belongs to the urease beta subunit family. Heterotrimer of UreA (gamma), UreB (beta) and UreC (alpha) subunits. Three heterotrimers associate to form the active enzyme.

Its subcellular location is the cytoplasm. It catalyses the reaction urea + 2 H2O + H(+) = hydrogencarbonate + 2 NH4(+). The protein operates within nitrogen metabolism; urea degradation; CO(2) and NH(3) from urea (urease route): step 1/1. The protein is Urease subunit beta of Variovorax paradoxus (strain S110).